A 162-amino-acid polypeptide reads, in one-letter code: MDEGYYSGNLESVLGYVSDMHTKLASITQLVIAKIETIDNDILNNDIVNFIMCRSNLNNPFISFLDTVYTIIDQEIYQNELINSLDDNKIIDCIVNKFMSFYKDNLENIVDAIITLKYIMNNPDFKTTYAEVLGSRIADIDIKQVIRENILQLSNDIRERYL.

Belongs to the poxviridae A49 protein family.

The sequence is that of Protein A49 from Variola virus (isolate Human/India/Ind3/1967) (VARV).